A 187-amino-acid polypeptide reads, in one-letter code: Meiotically up-regulated gene 155 protein (187 aa).

Positions 1 to 24 (MRPTSGCSKDDTIQKQNRRHNTVD) are disordered. A run of 2 helical transmembrane segments spans residues 83–105 (IISYHFISFHTIVVLLLLPPFSH) and 163–183 (VMLTKPKQFLFLLEFITLFIF).

Its subcellular location is the cytoplasm. It localises to the nucleus membrane. Functionally, has a role in meiosis. This is Meiotically up-regulated gene 155 protein (mug155) from Schizosaccharomyces pombe (strain 972 / ATCC 24843) (Fission yeast).